Reading from the N-terminus, the 306-residue chain is Glutaminase (306 aa).

S64, N115, E159, N166, Y190, Y242, and V260 together coordinate substrate.

This sequence belongs to the glutaminase family. Homotetramer.

It carries out the reaction L-glutamine + H2O = L-glutamate + NH4(+). This chain is Glutaminase, found in Aeromonas salmonicida (strain A449).